The sequence spans 367 residues: Ribosomal lysine N-methyltransferase 5 (367 aa).

The tract at residues glutamate 55–glutamate 74 is disordered. Residues arginine 58–lysine 68 show a composition bias toward basic residues. Residues tryptophan 110, glycine 170–glycine 172, aspartate 192, tryptophan 256, and methionine 288 contribute to the S-adenosyl-L-methionine site.

Belongs to the class I-like SAM-binding methyltransferase superfamily. RKM5 family.

S-adenosyl-L-methionine-dependent protein-lysine N-methyltransferase that monomethylates 60S ribosomal protein L1 (RPL1A and RPL1B) at 'Lys-46'. The sequence is that of Ribosomal lysine N-methyltransferase 5 (RKM5) from Saccharomyces cerevisiae (strain Lalvin EC1118 / Prise de mousse) (Baker's yeast).